Reading from the N-terminus, the 83-residue chain is Small ribosomal subunit protein bS16 (83 aa).

This sequence belongs to the bacterial ribosomal protein bS16 family.

The chain is Small ribosomal subunit protein bS16 from Azotobacter vinelandii (strain DJ / ATCC BAA-1303).